A 475-amino-acid chain; its full sequence is ADP-ribose glycohydrolase MACROD2 (475 aa).

Residues 59–240 (QEAPQMKKSL…IYKKKMNEFF (182 aa)) enclose the Macro domain. Substrate contacts are provided by residues 77 to 79 (GDI), 90 to 92 (AAN), and 97 to 102 (GGGGVD). K170 participates in a covalent cross-link: Glycyl lysine isopeptide (Lys-Gly) (interchain with G-Cter in ubiquitin). Substrate contacts are provided by residues 185 to 191 (ISTGIYG) and F224. Disordered regions lie at residues 241 to 306 (PVDD…SQEA) and 324 to 475 (GVNT…EDLQ). Basic and acidic residues-rich tracts occupy residues 251–261 (ADMKEDSEGPE) and 335–359 (SEDK…DSDM). Over residues 360-375 (TNHSVCDQELPNGQEN) the composition is skewed to polar residues. Residues 376–386 (DSAKSEGKTEA) are compositionally biased toward basic and acidic residues. Composition is skewed to polar residues over residues 387-402 (ESPS…SPNQ) and 440-469 (SQGS…PTES).

The protein belongs to the MacroD-type family. MacroD1/2-like subfamily. In terms of assembly, interacts with ADP-ribosylated PARP1. As to expression, expressed in the kidney.

It is found in the nucleus. It carries out the reaction 2''-O-acetyl-ADP-D-ribose + H2O = ADP-D-ribose + acetate + H(+). It catalyses the reaction 4-O-(ADP-D-ribosyl)-L-aspartyl-[protein] + H2O = L-aspartyl-[protein] + ADP-D-ribose + H(+). The enzyme catalyses 5-O-(ADP-D-ribosyl)-L-glutamyl-[protein] + H2O = L-glutamyl-[protein] + ADP-D-ribose + H(+). The catalysed reaction is alpha-NAD(+) + H2O = ADP-D-ribose + nicotinamide + H(+). With respect to regulation, subject to product inhibition by ADP-ribose. Removes ADP-ribose from aspartate and glutamate residues in proteins bearing a single ADP-ribose moiety. Inactive towards proteins bearing poly-ADP-ribose. Deacetylates O-acetyl-ADP ribose, a signaling molecule generated by the deacetylation of acetylated lysine residues in histones and other proteins. The polypeptide is ADP-ribose glycohydrolase MACROD2 (Mus musculus (Mouse)).